A 427-amino-acid chain; its full sequence is Glutamate-1-semialdehyde 2,1-aminomutase (427 aa).

K267 carries the post-translational modification N6-(pyridoxal phosphate)lysine.

Belongs to the class-III pyridoxal-phosphate-dependent aminotransferase family. HemL subfamily. Homodimer. It depends on pyridoxal 5'-phosphate as a cofactor.

Its subcellular location is the cytoplasm. The catalysed reaction is (S)-4-amino-5-oxopentanoate = 5-aminolevulinate. The protein operates within porphyrin-containing compound metabolism; protoporphyrin-IX biosynthesis; 5-aminolevulinate from L-glutamyl-tRNA(Glu): step 2/2. The chain is Glutamate-1-semialdehyde 2,1-aminomutase from Geotalea daltonii (strain DSM 22248 / JCM 15807 / FRC-32) (Geobacter daltonii).